The primary structure comprises 214 residues: NAD(P)H-quinone oxidoreductase subunit 6, chloroplastic (214 aa).

5 helical membrane passes run 10–30 (FSLF…VLLP), 32–52 (ILYS…IYLL), 61–81 (AQVL…IMLV), 102–122 (IIGL…VTTP), and 163–183 (LLPF…AIVI).

It belongs to the complex I subunit 6 family. As to quaternary structure, NDH is composed of at least 16 different subunits, 5 of which are encoded in the nucleus.

The protein localises to the plastid. The protein resides in the chloroplast thylakoid membrane. The enzyme catalyses a plastoquinone + NADH + (n+1) H(+)(in) = a plastoquinol + NAD(+) + n H(+)(out). It carries out the reaction a plastoquinone + NADPH + (n+1) H(+)(in) = a plastoquinol + NADP(+) + n H(+)(out). Its function is as follows. NDH shuttles electrons from NAD(P)H:plastoquinone, via FMN and iron-sulfur (Fe-S) centers, to quinones in the photosynthetic chain and possibly in a chloroplast respiratory chain. The immediate electron acceptor for the enzyme in this species is believed to be plastoquinone. Couples the redox reaction to proton translocation, and thus conserves the redox energy in a proton gradient. The protein is NAD(P)H-quinone oxidoreductase subunit 6, chloroplastic (ndhG) of Chlorokybus atmophyticus (Soil alga).